Reading from the N-terminus, the 491-residue chain is 2,3-bisphosphoglycerate-independent phosphoglycerate mutase (491 aa).

Residues Asp-11 and Ser-61 each contribute to the Mn(2+) site. Ser-61 serves as the catalytic Phosphoserine intermediate. Substrate-binding positions include His-118, 147–148 (RD), Arg-177, Arg-183, 247–250 (RNDR), and Lys-320. Mn(2+) is bound by residues Asp-386, His-390, Asp-427, His-428, and His-445.

This sequence belongs to the BPG-independent phosphoglycerate mutase family. In terms of assembly, monomer. Mn(2+) is required as a cofactor.

It catalyses the reaction (2R)-2-phosphoglycerate = (2R)-3-phosphoglycerate. Its pathway is carbohydrate degradation; glycolysis; pyruvate from D-glyceraldehyde 3-phosphate: step 3/5. Its function is as follows. Catalyzes the interconversion of 2-phosphoglycerate and 3-phosphoglycerate. This is 2,3-bisphosphoglycerate-independent phosphoglycerate mutase from Helicobacter pylori (strain J99 / ATCC 700824) (Campylobacter pylori J99).